Reading from the N-terminus, the 167-residue chain is Putative defense protein Hdd11-like (167 aa).

The signal sequence occupies residues 1–18 (MMFTYVVAVASVVALTSA). Positions 19-167 (YPTGAPPSAC…ESAPVKVLSH (149 aa)) constitute a Reelin domain. Residues Cys28 and Cys105 are joined by a disulfide bond.

It belongs to the insect defense protein family. In terms of tissue distribution, in larvae, high expression in the fat body and low expression in midgut, hemocytes and malpighian tubules. No expression in silkgland.

It localises to the secreted. May have antimicrobial activity. The protein is Putative defense protein Hdd11-like of Samia ricini (Indian eri silkmoth).